The primary structure comprises 1073 residues: Guanylyl cyclase C (1073 aa).

The first 23 residues, 1 to 23, serve as a signal peptide directing secretion; that stretch reads MKTPLLALALWSLLLQLGLTFWP. Topologically, residues 24–433 are extracellular; that stretch reads SSVSQNCHNG…IPGRGPQILM (410 aa). N-linked (GlcNAc...) asparagine glycosylation is found at Asn-32, Asn-43, Asn-79, Asn-195, Asn-284, Asn-307, and Asn-402. Residues 434–454 form a helical membrane-spanning segment; it reads IAVFTLTGTIVLLLLIALLVL. The Cytoplasmic segment spans residues 455–1073; that stretch reads RKYKREYALR…NTTDNESTHF (619 aa). The Protein kinase domain occupies 489-749; that stretch reads LKIDDDRRRD…KIENTLAKIF (261 aa). One can recognise a Guanylate cyclase domain in the interval 824 to 954; that stretch reads TIYFSDIVGF…DTVNTASRME (131 aa).

Belongs to the adenylyl cyclase class-4/guanylyl cyclase family. As to quaternary structure, homotrimer. Interacts via its C-terminal region with NHERF4. Interacts with the lectin chaperone VIP36. Glycosylation at Asn-79 is required for interaction with VIP36 while glycosylation at Asn-402 modulates ligand-mediated GC-C activation.

Its subcellular location is the cell membrane. It is found in the endoplasmic reticulum membrane. The catalysed reaction is GTP = 3',5'-cyclic GMP + diphosphate. Its function is as follows. Guanylyl cyclase that catalyzes synthesis of cyclic GMP (cGMP) from GTP. This chain is Guanylyl cyclase C (GUCY2C), found in Sus scrofa (Pig).